A 100-amino-acid polypeptide reads, in one-letter code: Large ribosomal subunit protein eL31 (100 aa).

The protein belongs to the eukaryotic ribosomal protein eL31 family.

This is Large ribosomal subunit protein eL31 from Hyperthermus butylicus (strain DSM 5456 / JCM 9403 / PLM1-5).